Consider the following 207-residue polypeptide: Strobilurin A biosynthesis cluster protein r1 (207 aa).

2 helical membrane-spanning segments follow: residues 108-128 and 169-189; these read FIFP…LLYL and NLTT…PFWI.

The protein localises to the membrane. It functions in the pathway mycotoxin biosynthesis. Its function is as follows. Part of the gene cluster that mediates the biosynthesis of strobilurin A, an antifungal polyketide that contains a key beta-methoxyacrylate toxophore that targets the complex III of the mitochondrial electron transport chain. Strobilurin biosynthesis begins with construction of benzoyl CoA by step-wise elimination of ammonia from phenylalanine by the phenylalanine ammonia-lyase str11, oxygenation by str8 and retro-Claisen reaction to form benzoic acid, which is activated to its CoA thiolester benzoyl CoA by the dedicated CoA ligase str10. Benzoyl CoA forms the starter unit for the highly reducing polyketide synthase stpks1 that produces the polyketide prestrobilutin A. The FAD-dependent oxygenase str9 then catalyzes the key oxidative rearrangement responsible for the creation of the beta-methoxyacrylate toxophore. Str9 performs epoxidation of the 2,3 olefin of prestrobilutin A, followed by Meinwald rearrangement to furnish the aldehyde intermediate. Rapid enolization of the aldehyde intermediate would give the beta-methoxyacrylate skeleton and methylations catalyzed by str2 and str3 complete the synthesis and lead to the production of strobilurin A. The short-chain dehydrogenase stl2 and the dehydrogenase str4 play a role in the shunt pathway leading to the production of bolineol. The cluster encodes no obvious halogenase gene that could be involved in production of strobilurin B, nor any obvious dimethylallyl-transferase that could be involved in the production of strobilurin G. It is possible that unknown proteins encoded in, or near, the cluster (such as str1 or stl1) may form new classes of halogenases or dimethylally-transferases, or that the responsible genes are located elsewhere on the genome. Similarly, proteins encoded by str5/str6 hydrolases appear to have no chemical role in the biosynthesis of strobilurin A. Finally, no obvious self-resistance gene is found within the cluster. The sequence is that of Strobilurin A biosynthesis cluster protein r1 from Strobilurus tenacellus.